The primary structure comprises 258 residues: Imidazole glycerol phosphate synthase subunit HisF (258 aa).

Residues Asp11 and Asp130 contribute to the active site.

This sequence belongs to the HisA/HisF family. Heterodimer of HisH and HisF.

It is found in the cytoplasm. It carries out the reaction 5-[(5-phospho-1-deoxy-D-ribulos-1-ylimino)methylamino]-1-(5-phospho-beta-D-ribosyl)imidazole-4-carboxamide + L-glutamine = D-erythro-1-(imidazol-4-yl)glycerol 3-phosphate + 5-amino-1-(5-phospho-beta-D-ribosyl)imidazole-4-carboxamide + L-glutamate + H(+). Its pathway is amino-acid biosynthesis; L-histidine biosynthesis; L-histidine from 5-phospho-alpha-D-ribose 1-diphosphate: step 5/9. Its function is as follows. IGPS catalyzes the conversion of PRFAR and glutamine to IGP, AICAR and glutamate. The HisF subunit catalyzes the cyclization activity that produces IGP and AICAR from PRFAR using the ammonia provided by the HisH subunit. The polypeptide is Imidazole glycerol phosphate synthase subunit HisF (Bradyrhizobium sp. (strain BTAi1 / ATCC BAA-1182)).